Reading from the N-terminus, the 1388-residue chain is Putative ATP-dependent RNA helicase DHX57 (1388 aa).

Residues 1-11 show a composition bias toward basic residues; it reads MSSSVRRKGKP. Disordered stretches follow at residues 1–107 and 121–154; these read MSSS…MTSE and EQGA…AGQE. The span at 34 to 51 shows a compositional bias: gly residues; it reads HGGGGGGGGSCGGGGGGS. Over residues 79 to 89 the composition is skewed to basic and acidic residues; sequence DSNKSKGETRP. 2 positions are modified to phosphoserine: Ser128 and Ser133. The UBA domain occupies 175–220; that stretch reads PVPECAVSPLAVQKLSRYGFHTEHCQLALRICDGDLGAALEHLLRQ. The segment at 299 to 326 adopts a C3H1-type zinc-finger fold; the sequence is DTSPETCKFYLKGNCKFGSKCKFKHEVP. At Ser475 the chain carries Phosphoserine. Residues 555–722 enclose the Helicase ATP-binding domain; it reads LKLLSKHQVV…FSYCPVITIP (168 aa). An ATP-binding site is contributed by 568-575; the sequence is GMTGCGKT. Positions 669-672 match the DEVH box motif; the sequence is DEVH. The region spanning 832–1012 is the Helicase C-terminal domain; it reads LIEALLEWIV…QLCLRIKILE (181 aa).

Belongs to the DEAD box helicase family. DEAH subfamily.

The catalysed reaction is ATP + H2O = ADP + phosphate + H(+). Functionally, probable ATP-binding RNA helicase. This chain is Putative ATP-dependent RNA helicase DHX57 (Dhx57), found in Mus musculus (Mouse).